An 812-amino-acid chain; its full sequence is MAAPEAWRARSCWFCEVAAATTMEATSREAAPAKSSASGPNAPPALFELCGRAVSAHMGVLESGVWALPGPILQSILPLLNIYYLERIEETALKKGLSTQAIWRRLWDELMKTRPSSLESVTCWRAKFMEAFFSHVLRGTIDVSSDRRLCDQRFSPLLHSSRHVRQLTICNMLQGATELVAEPNRRVLETLASSLHTLKFRHLLFSDVAAQQSLRQLLHQLIHHGAVSQVSLYSWPVPESALFILILTMSAGFWQPGPGGPPCRLCGEASRGRAPSRDEGSLLLGSRRPRRDAAERCAAALMASRRKSEAKQMPRAAPATRVTRRSTQESLTAGGTDLKRELHPPATSHEAPGTKRSPSAPAATSSASSSTSSYKRAPASSAPQPKPLKRFKRAAGKKGARTRQGPGAESEDLYDFVFIVAGEKEDGEEMEIGEVACGALDGSDPSCLGLPALEASQRFRSISTLELFTVPLSTEAALTLCHLLSSWVSLESLTLSYNGLGSNIFRLLDSLRALSGQAGCRLRALHLSDLFSPLPILELTRAIVRALPLLRVLSIRVDHPSQRDNPGVPGNAGPPSHIIGDEEIPENCLEQLEMGFPRGAQPAPLLCSVLKASGSLQQLSLDSATFASPQDFGLVLQTLKEYNLALKRLSFHDMNLADCQSEVLFLLQNLTLQEITFSFCRLFEKRPAQFLPEMVAAMKGNSTLKGLRLPGNRLGNAGLLALADVFSEDSSSSLCQLDISSNCIKPDGLLEFAKRLERWGRGAFGHLRLFQNWLDQDAVTAREAIRRLRATCHVVSDSWDSSQAFADYVSTM.

Residues 45 to 54 (ALFELCGRAV) are interaction with Elongin BC complex. Phosphoserine is present on residues S155, S276, and S326. The disordered stretch occupies residues 267–408 (GEASRGRAPS…GARTRQGPGA (142 aa)). Position 327 is a phosphothreonine (T327). A compositionally biased stretch (low complexity) spans 354 to 381 (TKRSPSAPAATSSASSSTSSYKRAPASS). A phosphoserine mark is found at S357 and S373. The span at 387-401 (PLKRFKRAAGKKGAR) shows a compositional bias: basic residues. 7 LRR repeats span residues 487 to 507 (WVSL…IFRL), 518 to 530 (AGCR…LSDL), 531 to 555 (FSPL…VLSI), 613 to 635 (SGSL…FGLV), 636 to 659 (LQTL…LADC), 701 to 728 (NSTL…VFSE), and 731 to 752 (SSSL…LLEF).

In terms of assembly, part of an E3 ubiquitin-protein ligase complex with Elongin BC (ELOB and ELOC), RBX1 and CUL5. Component of a probable ECS(LRRC41) complex which contains CUL5, RNF7/RBX2, Elongin BC and LRRC41. Interacts with CUL5, RNF7, ELOB and ELOC.

It participates in protein modification; protein ubiquitination. Probable substrate recognition component of an ECS (Elongin BC-CUL2/5-SOCS-box protein) E3 ubiquitin ligase complex which mediates the ubiquitination and subsequent proteasomal degradation of target proteins. The chain is Leucine-rich repeat-containing protein 41 (LRRC41) from Homo sapiens (Human).